The primary structure comprises 250 residues: Small ribosomal subunit protein uS2 (250 aa).

It belongs to the universal ribosomal protein uS2 family.

This chain is Small ribosomal subunit protein uS2, found in Acidovorax sp. (strain JS42).